A 475-amino-acid polypeptide reads, in one-letter code: UDP-N-acetylmuramate--L-alanine ligase (475 aa).

125-131 (GTHGKTT) contacts ATP.

Belongs to the MurCDEF family.

The protein localises to the cytoplasm. The catalysed reaction is UDP-N-acetyl-alpha-D-muramate + L-alanine + ATP = UDP-N-acetyl-alpha-D-muramoyl-L-alanine + ADP + phosphate + H(+). It participates in cell wall biogenesis; peptidoglycan biosynthesis. Its function is as follows. Cell wall formation. The protein is UDP-N-acetylmuramate--L-alanine ligase of Glaesserella parasuis serovar 5 (strain SH0165) (Haemophilus parasuis).